A 356-amino-acid chain; its full sequence is Formate-nitrite transporter (356 aa).

Residues 1–108 lie on the Cytoplasmic side of the membrane; the sequence is MPREKPRADE…TKATYPIMKM (108 aa). Residues 109–129 traverse the membrane as a helical segment; sequence FSLSVLAGMLLSVGGLLSITI. At 130–142 the chain is on the extracellular side; it reads GKGIPSSDIGIQK. A helical transmembrane segment spans residues 143 to 163; that stretch reads IVFGFFNSVGLNLVVLCGGEL. Topologically, residues 164 to 182 are cytoplasmic; that stretch reads FTSNCAFLIPGFMEGAYSR. A helical transmembrane segment spans residues 183-203; it reads WLFFKTHFVVYFGNLVGSIFV. Over 204–237 the chain is Extracellular; the sequence is STYFGKLLGSFESPMYLSAVKQIGETKVAMNWGR. The chain crosses the membrane as a helical span at residues 238-258; that stretch reads ALLSGIGCNWLVCCAVYFSAS. Topologically, residues 259–265 are cytoplasmic; sequence AKDLLSK. A helical membrane pass occupies residues 266–286; it reads LVVISFLVLTFASLEFENCVG. Residues 287-310 lie on the Extracellular side of the membrane; that stretch reads NMFLLSLSHMYGGNFTLGQWILNN. Residues 311–331 form a helical membrane-spanning segment; the sequence is LIPVSIGNFIGGTFLLGIPLW. Over 332–356 the chain is Cytoplasmic; sequence YVHVSNVYNIPFLDPLYQQSQAKTQ.

It belongs to the FNT transporter (TC 1.A.16) family. As to quaternary structure, homopentamer.

It is found in the membrane. The enzyme catalyses (S)-lactate(in) + H(+)(in) = (S)-lactate(out) + H(+)(out). It catalyses the reaction formate(in) + H(+)(in) = formate(out) + H(+)(out). It carries out the reaction pyruvate(out) + H(+)(out) = pyruvate(in) + H(+)(in). The catalysed reaction is acetate(out) + H(+)(out) = acetate(in) + H(+)(in). In terms of biological role, monocarboxylate-proton symporter; active in acidic-to-neutral pH range. Transports formate, acetate and L-lactate. This is Formate-nitrite transporter from Entamoeba histolytica (strain ATCC 30459 / HM-1:IMSS / ABRM).